The sequence spans 122 residues: Insulin-like growth factor 1 (122 aa).

A b region spans residues 49–77; it reads GPETLCGAELVDALQFVCGDRGFYFNKPT. 3 disulfide bridges follow: C54/C96, C66/C109, and C95/C100. Residues 78-89 are c; the sequence is GYGSSSRRAPQT. Residues 90–110 are a; sequence GIVDECCFRSCDLRRLEMYCA. Residues 111-118 are d; that stretch reads PLKPAKSA. A propeptide spans 119-122 (e peptide); that stretch reads RSVR.

Belongs to the insulin family. In terms of assembly, forms a ternary complex with IGFR1 and ITGAV:ITGB3. Forms a ternary complex with IGFR1 and ITGA6:ITGB4. Forms a ternary complex with IGFBP3 and ALS.

Its subcellular location is the secreted. The insulin-like growth factors, isolated from plasma, are structurally and functionally related to insulin but have a much higher growth-promoting activity. May be a physiological regulator of [1-14C]-2-deoxy-D-glucose (2DG) transport and glycogen synthesis in osteoblasts. Stimulates glucose transport in bone-derived osteoblastic (PyMS) cells and is effective at much lower concentrations than insulin, not only regarding glycogen and DNA synthesis but also with regard to enhancing glucose uptake. May play a role in synapse maturation. Ca(2+)-dependent exocytosis of IGF1 is required for sensory perception of smell in the olfactory bulb. Acts as a ligand for IGF1R. Binds to the alpha subunit of IGF1R, leading to the activation of the intrinsic tyrosine kinase activity which autophosphorylates tyrosine residues in the beta subunit thus initiating a cascade of down-stream signaling events leading to activation of the PI3K-AKT/PKB and the Ras-MAPK pathways. Binds to integrins ITGAV:ITGB3 and ITGA6:ITGB4. Its binding to integrins and subsequent ternary complex formation with integrins and IGFR1 are essential for IGF1 signaling. Induces the phosphorylation and activation of IGFR1, MAPK3/ERK1, MAPK1/ERK2 and AKT1. As part of the MAPK/ERK signaling pathway, acts as a negative regulator of apoptosis in cardiomyocytes via promotion of STUB1/CHIP-mediated ubiquitination and degradation of ICER-type isoforms of CREM. The chain is Insulin-like growth factor 1 from Equus caballus (Horse).